Reading from the N-terminus, the 253-residue chain is Nurim homolog (253 aa).

At 1-2 the chain is on the nuclear side; the sequence is MA. Residues 3-30 traverse the membrane as a helical segment; it reads TFAKVMLLLSSVATFGYTFFVVGKLMLF. Residues 31–56 are Perinuclear space-facing; it reads LSTPRSISKAHTWIFNLLDNKSRLET. A helical transmembrane segment spans residues 57 to 78; that stretch reads AYGPIVFDTLYLIGFIFQHSFL. Over 79 to 96 the chain is Nuclear; it reads KSALVKNLWRKLGLAAAE. Residues 97–113 form a helical membrane-spanning segment; the sequence is RTIYSLTSSICLHYLLK. The Perinuclear space segment spans residues 114–132; sequence NWLPAQSIVLWQVDVDESA. Residues 133–161 form a helical membrane-spanning segment; the sequence is PLWWTFVVTHGLGWAVIFGGSLIMDLPEL. At 162–188 the chain is on the nuclear side; the sequence is LGVKQVYYDLKEYGEPVAYKSSELRNL. A helical transmembrane segment spans residues 189 to 207; it reads YSHVRHPSFVGLSVILFAT. At 208–213 the chain is on the perinuclear space side; it reads NVMSLD. Residues 214 to 231 form a helical membrane-spanning segment; the sequence is RLLLASLLTVYMYVAWST. The Nuclear segment spans residues 232 to 253; it reads DDKDVAYQKQQLRNKKHELKAQ.

Belongs to the nurim family.

It is found in the nucleus inner membrane. The polypeptide is Nurim homolog (nrm) (Drosophila pseudoobscura pseudoobscura (Fruit fly)).